A 236-amino-acid polypeptide reads, in one-letter code: Purine nucleoside phosphorylase DeoD-type (236 aa).

His-5 provides a ligand contact to a purine D-ribonucleoside. Phosphate-binding positions include Gly-21, Arg-25, Arg-44, and 88–91 (RVGT). A purine D-ribonucleoside-binding positions include 180–182 (EME) and 204–205 (SD). The Proton donor role is filled by Asp-205.

Belongs to the PNP/UDP phosphorylase family. In terms of assembly, homohexamer; trimer of homodimers.

It carries out the reaction a purine D-ribonucleoside + phosphate = a purine nucleobase + alpha-D-ribose 1-phosphate. The enzyme catalyses a purine 2'-deoxy-D-ribonucleoside + phosphate = a purine nucleobase + 2-deoxy-alpha-D-ribose 1-phosphate. In terms of biological role, catalyzes the reversible phosphorolytic breakdown of the N-glycosidic bond in the beta-(deoxy)ribonucleoside molecules, with the formation of the corresponding free purine bases and pentose-1-phosphate. In Shewanella amazonensis (strain ATCC BAA-1098 / SB2B), this protein is Purine nucleoside phosphorylase DeoD-type.